The sequence spans 91 residues: Small ribosomal subunit protein bS16c (91 aa).

Belongs to the bacterial ribosomal protein bS16 family.

It localises to the plastid. The protein localises to the chloroplast. This chain is Small ribosomal subunit protein bS16c, found in Pelargonium hortorum (Common geranium).